Here is a 128-residue protein sequence, read N- to C-terminus: Small ribosomal subunit protein bS6 (128 aa).

The segment at 97–128 is disordered; sequence TTPSPMMKEEKSRSLTAAPATDEAKPAEAESA. Basic and acidic residues predominate over residues 118 to 128; sequence DEAKPAEAESA.

It belongs to the bacterial ribosomal protein bS6 family.

Its function is as follows. Binds together with bS18 to 16S ribosomal RNA. This is Small ribosomal subunit protein bS6 from Aromatoleum aromaticum (strain DSM 19018 / LMG 30748 / EbN1) (Azoarcus sp. (strain EbN1)).